The sequence spans 219 residues: Probable GTP-binding protein EngB (219 aa).

The EngB-type G domain maps to Val-31–Pro-205. Residues Gly-39–Ser-46, Gly-66–Leu-70, Asp-84–Gly-87, Thr-151–Asp-154, and Phe-184–Ser-186 each bind GTP. Mg(2+)-binding residues include Ser-46 and Thr-68.

This sequence belongs to the TRAFAC class TrmE-Era-EngA-EngB-Septin-like GTPase superfamily. EngB GTPase family. The cofactor is Mg(2+).

Its function is as follows. Necessary for normal cell division and for the maintenance of normal septation. The protein is Probable GTP-binding protein EngB of Shewanella baltica (strain OS223).